We begin with the raw amino-acid sequence, 634 residues long: tRNA uridine 5-carboxymethylaminomethyl modification enzyme MnmG (634 aa).

14–19 (GGGHAG) serves as a coordination point for FAD. 279 to 293 (GPRYCPSIEDKVVRF) lines the NAD(+) pocket.

The protein belongs to the MnmG family. As to quaternary structure, homodimer. Heterotetramer of two MnmE and two MnmG subunits. The cofactor is FAD.

The protein resides in the cytoplasm. Functionally, NAD-binding protein involved in the addition of a carboxymethylaminomethyl (cmnm) group at the wobble position (U34) of certain tRNAs, forming tRNA-cmnm(5)s(2)U34. The polypeptide is tRNA uridine 5-carboxymethylaminomethyl modification enzyme MnmG (Xanthomonas campestris pv. campestris (strain B100)).